The chain runs to 437 residues: Branched-chain amino acid transport system 2 carrier protein (437 aa).

12 consecutive transmembrane segments (helical) span residues 9–29, 43–63, 80–100, 117–137, 149–169, 192–212, 228–248, 280–300, 308–328, 335–355, 369–389, and 404–424; these read LLAL…IIFP, AAFG…VALA, AGVA…ATPR, GGVP…FLVL, VITP…IFAP, GYLT…ATAI, MIAG…LFYL, LLLA…LITA, LLPV…LLVA, LISL…VLIA, VFVP…LGAA, and LADQ…LAVV.

The protein belongs to the branched chain amino acid transporter family.

Its subcellular location is the cell inner membrane. Component of the LIV-II transport system for branched-chain amino acids. BraB is specific for isoleucine, leucine and valine. The LIV-II transport system is coupled to sodium and lithium ions. This Pseudomonas aeruginosa (strain ATCC 15692 / DSM 22644 / CIP 104116 / JCM 14847 / LMG 12228 / 1C / PRS 101 / PAO1) protein is Branched-chain amino acid transport system 2 carrier protein (braB).